The following is a 510-amino-acid chain: Probable malate:quinone oxidoreductase (510 aa).

It belongs to the MQO family. FAD serves as cofactor.

It catalyses the reaction (S)-malate + a quinone = a quinol + oxaloacetate. The protein operates within carbohydrate metabolism; tricarboxylic acid cycle; oxaloacetate from (S)-malate (quinone route): step 1/1. The protein is Probable malate:quinone oxidoreductase of Wigglesworthia glossinidia brevipalpis.